Here is a 706-residue protein sequence, read N- to C-terminus: Polyribonucleotide nucleotidyltransferase (706 aa).

Residues Asp-487 and Asp-493 each coordinate Mg(2+). Positions 554–613 (PRIHTMKISSDKIKDVIGKGGAVIRALCEETGTTIEIEDDGTIKIAATEGAAAKEAIRRI) constitute a KH domain. Residues 623 to 691 (GRIYQGKVAR…RQGRVRLSMK (69 aa)) enclose the S1 motif domain.

This sequence belongs to the polyribonucleotide nucleotidyltransferase family. Component of the RNA degradosome, which is a multiprotein complex involved in RNA processing and mRNA degradation. Mg(2+) serves as cofactor.

The protein resides in the cytoplasm. It carries out the reaction RNA(n+1) + phosphate = RNA(n) + a ribonucleoside 5'-diphosphate. Involved in mRNA degradation. Catalyzes the phosphorolysis of single-stranded polyribonucleotides processively in the 3'- to 5'-direction. This Vibrio atlanticus (strain LGP32) (Vibrio splendidus (strain Mel32)) protein is Polyribonucleotide nucleotidyltransferase.